The chain runs to 232 residues: Flagellar L-ring protein (232 aa).

A signal peptide spans 1-15 (MKKVLFYVLPFAFFG). Cys-16 carries the N-palmitoyl cysteine lipid modification. The S-diacylglycerol cysteine moiety is linked to residue Cys-16.

The protein belongs to the FlgH family. As to quaternary structure, the basal body constitutes a major portion of the flagellar organelle and consists of four rings (L,P,S, and M) mounted on a central rod.

Its subcellular location is the cell outer membrane. The protein localises to the bacterial flagellum basal body. Assembles around the rod to form the L-ring and probably protects the motor/basal body from shearing forces during rotation. The protein is Flagellar L-ring protein of Campylobacter jejuni subsp. jejuni serotype O:6 (strain 81116 / NCTC 11828).